The following is a 402-amino-acid chain: Putative RNA-guided DNA endonuclease InsQ (402 aa).

Catalysis depends on residues D183 and E267. Residues C334, C337, C353, and C356 each contribute to the Zn(2+) site. Residue D363 is part of the active site.

In the N-terminal section; belongs to the transposase 2 family. This sequence in the C-terminal section; belongs to the transposase 35 family.

In terms of biological role, an RNA-guided dsDNA endonuclease. When guided by an RNA derived from the right-end element of its insertion sequence element (IS), cleaves DNA downstream of the transposon-associated motif (TAM). Cleaves supercoiled and linear DNA in a staggered manner 15-21 bases from the TAM yielding 5'-overhangs. Binds reRNA, an approximately 150 nucleotide base sRNA derived from the 3' end of its own gene, the right end (RE) of the insertion sequence (IS) plus sequence downstream of the IS. Its function is as follows. Not required for transposition of the insertion element. The corresponding transposase in strains MG1655 and W3110 is a truncated pseudogene (yncK). The protein is Putative RNA-guided DNA endonuclease InsQ (insQ) of Escherichia coli (strain K12).